We begin with the raw amino-acid sequence, 402 residues long: Bisdemethoxycurcumin synthase (402 aa).

The active-site Acyl-thioester intermediate is Cys-174.

The protein belongs to the thiolase-like superfamily. Chalcone/stilbene synthases family. Homodimer.

It catalyses the reaction 2 4-coumaroyl-CoA + malonyl-CoA + H2O + H(+) = bisdemethoxycurcumin + 2 CO2 + 3 CoA. Its pathway is secondary metabolite biosynthesis; flavonoid biosynthesis. Plant-specific type III polyketide synthase (PKS) that catalyzes the one-pot formation of the C6-C7-C6 diarylheptanoid scaffold of bisdemethoxycurcumin by the condensation of two molecules of 4-coumaroyl-CoA and one molecule of malonyl-CoA. The protein is Bisdemethoxycurcumin synthase of Oryza sativa subsp. japonica (Rice).